Consider the following 323-residue polypeptide: Transcription initiation factor IIB 7 (323 aa).

The segment covering Met-1–Gln-16 has biased composition (basic and acidic residues). The tract at residues Met-1–Asp-35 is disordered. The TFIIB-type zinc-finger motif lies at Glu-24–Glu-56. The Zn(2+) site is built by Cys-29, Cys-32, Cys-48, and Cys-51. A run of 2 repeats spans residues Ser-142–Leu-225 and Lys-236–Glu-317.

Belongs to the TFIIB family.

Functionally, stabilizes TBP binding to an archaeal box-A promoter. Also responsible for recruiting RNA polymerase II to the pre-initiation complex (DNA-TBP-TFIIB). This Halobacterium salinarum (strain ATCC 700922 / JCM 11081 / NRC-1) (Halobacterium halobium) protein is Transcription initiation factor IIB 7.